Here is a 436-residue protein sequence, read N- to C-terminus: D-amino acid dehydrogenase (436 aa).

3 to 17 (IVVLGAGVVGVTSAY) is an FAD binding site.

Belongs to the DadA oxidoreductase family. It depends on FAD as a cofactor.

It catalyses the reaction a D-alpha-amino acid + A + H2O = a 2-oxocarboxylate + AH2 + NH4(+). It functions in the pathway amino-acid degradation; D-alanine degradation; NH(3) and pyruvate from D-alanine: step 1/1. Its function is as follows. Oxidative deamination of D-amino acids. This chain is D-amino acid dehydrogenase, found in Cereibacter sphaeroides (strain ATCC 17023 / DSM 158 / JCM 6121 / CCUG 31486 / LMG 2827 / NBRC 12203 / NCIMB 8253 / ATH 2.4.1.) (Rhodobacter sphaeroides).